The sequence spans 177 residues: ATP synthase subunit delta (177 aa).

Belongs to the ATPase delta chain family. In terms of assembly, F-type ATPases have 2 components, F(1) - the catalytic core - and F(0) - the membrane proton channel. F(1) has five subunits: alpha(3), beta(3), gamma(1), delta(1), epsilon(1). F(0) has three main subunits: a(1), b(2) and c(10-14). The alpha and beta chains form an alternating ring which encloses part of the gamma chain. F(1) is attached to F(0) by a central stalk formed by the gamma and epsilon chains, while a peripheral stalk is formed by the delta and b chains.

The protein localises to the cell membrane. Its function is as follows. F(1)F(0) ATP synthase produces ATP from ADP in the presence of a proton or sodium gradient. F-type ATPases consist of two structural domains, F(1) containing the extramembraneous catalytic core and F(0) containing the membrane proton channel, linked together by a central stalk and a peripheral stalk. During catalysis, ATP synthesis in the catalytic domain of F(1) is coupled via a rotary mechanism of the central stalk subunits to proton translocation. In terms of biological role, this protein is part of the stalk that links CF(0) to CF(1). It either transmits conformational changes from CF(0) to CF(1) or is implicated in proton conduction. This chain is ATP synthase subunit delta, found in Streptococcus suis (strain 98HAH33).